Here is a 162-residue protein sequence, read N- to C-terminus: Putative pre-16S rRNA nuclease (162 aa).

Belongs to the YqgF nuclease family.

Its subcellular location is the cytoplasm. In terms of biological role, could be a nuclease involved in processing of the 5'-end of pre-16S rRNA. This Brucella melitensis biotype 1 (strain ATCC 23456 / CCUG 17765 / NCTC 10094 / 16M) protein is Putative pre-16S rRNA nuclease.